Consider the following 332-residue polypeptide: MSPPESVRHISVLGREAVDWLAPRDGGVYVDATFGAGGYSRAILTIDGTRVIGIDRDRTAIAGGFDLVEQSDGRLTLVESRFSQLAEVCASQGVGQVDGVVMDVGVSSMQLDQAERGFSFRFDGPLDMRMGHDGFSAAEVIAAASEADLANIFYIFGEERHSRAVARAIVAARAETPIVTTKALADLVSKVVHSKPGEIHPATRSFQGLRIFVNAELDELHLALTAAERVLKPGGRLVVVSFHSLEDRIVKNFFAERGKASSGSRHRPEMAQQQPSFAILTKRPVTPSDEETAANPRARSAKLRAGERTAAPAQPEAPLPHWPTLASVMGRR.

S-adenosyl-L-methionine is bound by residues 37-39 (GGY), Asp55, Phe82, Asp103, and Gln110. Residues 281 to 332 (TKRPVTPSDEETAANPRARSAKLRAGERTAAPAQPEAPLPHWPTLASVMGRR) form a disordered region.

This sequence belongs to the methyltransferase superfamily. RsmH family.

It localises to the cytoplasm. It catalyses the reaction cytidine(1402) in 16S rRNA + S-adenosyl-L-methionine = N(4)-methylcytidine(1402) in 16S rRNA + S-adenosyl-L-homocysteine + H(+). In terms of biological role, specifically methylates the N4 position of cytidine in position 1402 (C1402) of 16S rRNA. In Rhodopseudomonas palustris (strain BisA53), this protein is Ribosomal RNA small subunit methyltransferase H.